We begin with the raw amino-acid sequence, 36 residues long: Photosystem I reaction center subunit VIII (36 aa).

A helical membrane pass occupies residues 9-29; that stretch reads IFVPLVGLVFPAVAMASLFLY.

Belongs to the PsaI family.

The protein resides in the plastid. It localises to the chloroplast thylakoid membrane. May help in the organization of the PsaL subunit. The protein is Photosystem I reaction center subunit VIII of Ostreococcus tauri.